The sequence spans 428 residues: MQTLIWNTLNSAQKQAALSRPAQAVGEQITQAVNAIKSNVINNGDKALFELAEKFDKTTLESLVISKAQVEQASQRIATELKQAIQTAKGNIERFHQAQKNQTVDLETQAGVRCQVVTRPIQNVGLYIPGGSAPLFSTVLMLAVPAKIAGCKTIVLCSPPPIADEILYTANLCGVETIYAIGGAQAIFAMANGTESVQKVDKIFGPGNAFVTEAKRQVLQQGTAIDMPAGPSEVLVIADEFADPDFVASDLLSQAEHGSDSQVILVTNCETLAKQTALSIEQQLARLPRAETARKALAHSRTFIAEDLQQCVEISNAYAPEHLVVQVENARNLLPFLDNAGSIFLGAYSPESMGDYASGTNHVLPTYGYTRTHSSLGLADFSKRMTVQELTPQGFKDLANTVMLMAEAEQLEAHKQAVAIRLEKLTQE.

3 residues coordinate NAD(+): Tyr127, Gln185, and Asn208. Substrate contacts are provided by Ser232, Gln254, and His257. Gln254 and His257 together coordinate Zn(2+). Active-site proton acceptor residues include Glu321 and His322. 4 residues coordinate substrate: His322, Asp355, Glu409, and His414. Asp355 serves as a coordination point for Zn(2+). His414 is a binding site for Zn(2+).

Belongs to the histidinol dehydrogenase family. Zn(2+) is required as a cofactor.

The catalysed reaction is L-histidinol + 2 NAD(+) + H2O = L-histidine + 2 NADH + 3 H(+). It functions in the pathway amino-acid biosynthesis; L-histidine biosynthesis; L-histidine from 5-phospho-alpha-D-ribose 1-diphosphate: step 9/9. Catalyzes the sequential NAD-dependent oxidations of L-histidinol to L-histidinaldehyde and then to L-histidine. The chain is Histidinol dehydrogenase from Pasteurella multocida (strain Pm70).